We begin with the raw amino-acid sequence, 648 residues long: Threonine--tRNA ligase (648 aa).

A TGS domain is found at 1–61 (MINITFPDGA…TEDGSIEIVT (61 aa)). Positions 242–540 (DHRKLGKELD…LIENYKGAFP (299 aa)) are catalytic. Zn(2+) contacts are provided by Cys-336, His-387, and His-517.

This sequence belongs to the class-II aminoacyl-tRNA synthetase family. Homodimer. Requires Zn(2+) as cofactor.

The protein localises to the cytoplasm. It carries out the reaction tRNA(Thr) + L-threonine + ATP = L-threonyl-tRNA(Thr) + AMP + diphosphate + H(+). Its function is as follows. Catalyzes the attachment of threonine to tRNA(Thr) in a two-step reaction: L-threonine is first activated by ATP to form Thr-AMP and then transferred to the acceptor end of tRNA(Thr). Also edits incorrectly charged L-seryl-tRNA(Thr). This Streptococcus thermophilus (strain ATCC BAA-250 / LMG 18311) protein is Threonine--tRNA ligase.